The primary structure comprises 70 residues: DNA gyrase inhibitor YacG (70 aa).

Zn(2+) contacts are provided by C21, C24, C36, and C40.

Belongs to the DNA gyrase inhibitor YacG family. As to quaternary structure, interacts with GyrB. Requires Zn(2+) as cofactor.

Its function is as follows. Inhibits all the catalytic activities of DNA gyrase by preventing its interaction with DNA. Acts by binding directly to the C-terminal domain of GyrB, which probably disrupts DNA binding by the gyrase. The protein is DNA gyrase inhibitor YacG of Sinorhizobium medicae (strain WSM419) (Ensifer medicae).